We begin with the raw amino-acid sequence, 111 residues long: uncharacterized protein (111 aa).

One can recognise an HIT domain in the interval 4 to 111 (IFERIIEGAV…LGGGLLGSIA (108 aa)). Residues 96–100 (HLHIH) carry the Histidine triad motif motif.

This is an uncharacterized protein from Chlamydia trachomatis serovar D (strain ATCC VR-885 / DSM 19411 / UW-3/Cx).